Consider the following 139-residue polypeptide: Putative pre-16S rRNA nuclease (139 aa).

It belongs to the YqgF nuclease family.

It localises to the cytoplasm. Functionally, could be a nuclease involved in processing of the 5'-end of pre-16S rRNA. The polypeptide is Putative pre-16S rRNA nuclease (Streptococcus gordonii (strain Challis / ATCC 35105 / BCRC 15272 / CH1 / DL1 / V288)).